A 1027-amino-acid chain; its full sequence is Xyloglucanase (1027 aa).

A signal peptide spans 1–32 (MKTFLGKKLWMASLAVALAAGSFAALPEMTSA). Residue Asp-70 is the Nucleophile of the active site. 4 BNR repeats span residues 134-143 (RSTDRGDTWQ), 185-196 (WRSSDYGATWSK), 252-262 (YRSTDGGATWT), and 357-367 (FRSKDGGTTWT). Asp-479 serves as the catalytic Proton donor. BNR repeat units follow at residues 537–545 (SSDGGTNWY) and 717–727 (FRSDDGGASWV). Positions 876-1027 (PEGSIRIEMY…SGTLQWGIEP (152 aa)) constitute a CBM3 domain.

Belongs to the glycosyl hydrolase 74 family.

Functionally, hydrolyzes the glucosidic bonds of unbranched Glc residues in tamarind seed xyloglucan, producing XXXG, XLXG, XXLG and XLLG. May have a dual endo- and exo- mode of action towards xyloglucan, or may have an endo-processive mode of action. The chain is Xyloglucanase from Paenibacillus sp.